Consider the following 147-residue polypeptide: MRLKIMELRYKRELEKLIEKAEKSLEASENLYNSEFYDFAVSRIYYSMFYCVKALLLTKEINPKKHSGVLKMFAKEFIKTNELDVELFEYINEAYNYRQTADYDATIEIKKEEAEYLLHKGHIFLNKTKKYLISKNILKGENDNTKS.

It belongs to the UPF0332 family.

In terms of biological role, putative toxin component of a putative type VII toxin-antitoxin (TA) system. Its cognate antitoxin might be MJ0141. The polypeptide is Putative toxin MJ0142 (Methanocaldococcus jannaschii (strain ATCC 43067 / DSM 2661 / JAL-1 / JCM 10045 / NBRC 100440) (Methanococcus jannaschii)).